Reading from the N-terminus, the 158-residue chain is NAD(P)H-quinone oxidoreductase subunit J, chloroplastic (158 aa).

The protein belongs to the complex I 30 kDa subunit family. As to quaternary structure, NDH is composed of at least 16 different subunits, 5 of which are encoded in the nucleus.

It localises to the plastid. The protein resides in the chloroplast thylakoid membrane. The catalysed reaction is a plastoquinone + NADH + (n+1) H(+)(in) = a plastoquinol + NAD(+) + n H(+)(out). It carries out the reaction a plastoquinone + NADPH + (n+1) H(+)(in) = a plastoquinol + NADP(+) + n H(+)(out). Its function is as follows. NDH shuttles electrons from NAD(P)H:plastoquinone, via FMN and iron-sulfur (Fe-S) centers, to quinones in the photosynthetic chain and possibly in a chloroplast respiratory chain. The immediate electron acceptor for the enzyme in this species is believed to be plastoquinone. Couples the redox reaction to proton translocation, and thus conserves the redox energy in a proton gradient. The protein is NAD(P)H-quinone oxidoreductase subunit J, chloroplastic of Capsella bursa-pastoris (Shepherd's purse).